Reading from the N-terminus, the 246-residue chain is MALIPLSQDLADILAPYLPTPPDSSARLPFVTLTYAQSLDARIAKQKGERTVISHEETKTMTHYLRYHHSGILIGSGTALADDPGLNCRWTPAADGADCTEQSSPRPIILDVRGRWRYRGSKIEYLHNLGKGKAPIVVTGGEPEVRELGVSYLQLGVDEGGRLNWGELFERLYSEHHLESVMVEGGAEVLNQLLLRPDIVDSLVITIGSKFLGSLGVAVSPAEEVNLEHVNWWHGTSDSVLCGRLA.

Residues Thr78, Asp82, Leu163, and Gly186–Leu190 contribute to the NADP(+) site.

Belongs to the HTP reductase family. Homodimer.

It catalyses the reaction 2,5-diamino-6-(1-D-ribitylamino)pyrimidin-4(3H)-one 5'-phosphate + NADP(+) = 2,5-diamino-6-(1-D-ribosylamino)pyrimidin-4(3H)-one 5'-phosphate + NADPH + H(+). The catalysed reaction is 2,5-diamino-6-(1-D-ribitylamino)pyrimidin-4(3H)-one 5'-phosphate + NAD(+) = 2,5-diamino-6-(1-D-ribosylamino)pyrimidin-4(3H)-one 5'-phosphate + NADH + H(+). It participates in cofactor biosynthesis; riboflavin biosynthesis. Functionally, catalyzes an early step in riboflavin biosynthesis, the NADPH-dependent reduction of the ribose side chain of 2,5-diamino-6-ribosylamino-4(3H)-pyrimidinone 5'-phosphate, yielding 2,5-diamino-6-ribitylamino-4(3H)-pyrimidinone 5'-phosphate. The sequence is that of 2,5-diamino-6-ribosylamino-4(3H)-pyrimidinone 5'-phosphate reductase (RIB7) from Eremothecium gossypii (strain ATCC 10895 / CBS 109.51 / FGSC 9923 / NRRL Y-1056) (Yeast).